Here is a 324-residue protein sequence, read N- to C-terminus: uncharacterized protein (324 aa).

The protein belongs to the mgp1/MG371 family.

This is an uncharacterized protein from Mycoplasma genitalium (strain ATCC 33530 / DSM 19775 / NCTC 10195 / G37) (Mycoplasmoides genitalium).